A 470-amino-acid chain; its full sequence is Glucose-1-phosphate adenylyltransferase (470 aa).

Alpha-D-glucose 1-phosphate contacts are provided by residues G164, 181–182, and S199; that span reads EK.

This sequence belongs to the bacterial/plant glucose-1-phosphate adenylyltransferase family. As to quaternary structure, homotetramer.

It catalyses the reaction alpha-D-glucose 1-phosphate + ATP + H(+) = ADP-alpha-D-glucose + diphosphate. The protein operates within glycan biosynthesis; glycogen biosynthesis. Involved in the biosynthesis of ADP-glucose, a building block required for the elongation reactions to produce glycogen. Catalyzes the reaction between ATP and alpha-D-glucose 1-phosphate (G1P) to produce pyrophosphate and ADP-Glc. This chain is Glucose-1-phosphate adenylyltransferase, found in Pseudarthrobacter chlorophenolicus (strain ATCC 700700 / DSM 12829 / CIP 107037 / JCM 12360 / KCTC 9906 / NCIMB 13794 / A6) (Arthrobacter chlorophenolicus).